Reading from the N-terminus, the 202-residue chain is Na(+)-translocating NADH-quinone reductase subunit E (202 aa).

6 helical membrane passes run 11–31, 35–55, 81–101, 114–134, 144–164, and 180–200; these read AVFI…FLAV, VTTS…SVPV, FLRF…LEMA, GIFL…SFMV, VVYG…LAGI, and LGIT…FSGI.

It belongs to the NqrDE/RnfAE family. In terms of assembly, composed of six subunits; NqrA, NqrB, NqrC, NqrD, NqrE and NqrF.

It is found in the cell inner membrane. It catalyses the reaction a ubiquinone + n Na(+)(in) + NADH + H(+) = a ubiquinol + n Na(+)(out) + NAD(+). Functionally, NQR complex catalyzes the reduction of ubiquinone-1 to ubiquinol by two successive reactions, coupled with the transport of Na(+) ions from the cytoplasm to the periplasm. NqrA to NqrE are probably involved in the second step, the conversion of ubisemiquinone to ubiquinol. The sequence is that of Na(+)-translocating NADH-quinone reductase subunit E from Pseudoalteromonas translucida (strain TAC 125).